The following is a 126-amino-acid chain: Large ribosomal subunit protein bL17 (126 aa).

This sequence belongs to the bacterial ribosomal protein bL17 family. In terms of assembly, part of the 50S ribosomal subunit. Contacts protein L32.

The sequence is that of Large ribosomal subunit protein bL17 from Nitrosococcus oceani (strain ATCC 19707 / BCRC 17464 / JCM 30415 / NCIMB 11848 / C-107).